The following is a 450-amino-acid chain: tRNA (guanine-N(7)-)-methyltransferase non-catalytic subunit TRM82 (450 aa).

The segment covering 69–82 has biased composition (basic and acidic residues); that stretch reads AAKKLKTNEGEAIE. Residues 69–103 form a disordered region; the sequence is AAKKLKTNEGEAIERPGNQRRVPLPGKDPKVPVPG. WD repeat units follow at residues 108 to 147, 200 to 241, and 245 to 285; these read PVYQYIRCLQLSHDEKMLVACTDSDKAAVFFRIELHKDNC, GHVS…VIDK, and GHKE…LMSS.

The protein belongs to the WD repeat TRM82 family. In terms of assembly, forms a heterodimer with the catalytic subunit TRM8.

The protein resides in the nucleus. The protein operates within tRNA modification; N(7)-methylguanine-tRNA biosynthesis. Its function is as follows. Required for the formation of N(7)-methylguanine at position 46 (m7G46) in tRNA. In the complex, it is required to stabilize and induce conformational changes of the catalytic subunit. In Eremothecium gossypii (strain ATCC 10895 / CBS 109.51 / FGSC 9923 / NRRL Y-1056) (Yeast), this protein is tRNA (guanine-N(7)-)-methyltransferase non-catalytic subunit TRM82.